The primary structure comprises 238 residues: Thymidine kinase, cytosolic (238 aa).

An N-acetylserine modification is found at Ser2. Residues Ser2 and Ser13 each carry the phosphoserine modification. ATP-binding positions include 26–33, 58–60, and 97–100; these read GPMFSGKS, DTR, and DEGQ. The active-site Proton acceptor is Glu98. Phe128 lines the substrate pocket. Zn(2+)-binding residues include Cys153 and Cys156. Residues 172 to 176 and Tyr181 contribute to the substrate site; that span reads VEVIG. 2 residues coordinate Zn(2+): Cys185 and Cys188. A KEN box motif is present at residues 206 to 208; the sequence is KEN. Ser235 carries the post-translational modification Phosphoserine.

It belongs to the thymidine kinase family. Homotetramer. Tetramerization from dimerization is induced by ATP and increases catalytic efficiency due to a high affinity for thymidine. Tetramerization is inhibited by phosphorylation at Ser-13. Interacts (via the KEN box) with FZR1. Phosphorylated on Ser-13 in mitosis. Phosphorylation of Ser-13 by CDK1 during mitosis reduces homotetramerization and catalytic efficiency when DNA replication is complete and intracellular TK1 is still present at a high level. In terms of processing, polyubiquitinated. Postmitosis, ubiquitination leads to proteasomal degradation. The KEN box sequence located at the C-terminal region targets for degradation by the anaphase promoting complex (APC/C) activated and rate-limited by FZR1.

The protein localises to the cytoplasm. The catalysed reaction is thymidine + ATP = dTMP + ADP + H(+). In terms of biological role, cell-cycle-regulated enzyme of importance in nucleotide metabolism. Catalyzes the first enzymatic step in the salvage pathway converting thymidine into thymidine monophosphate. Transcriptional regulation limits expression to the S phase of the cell cycle and transient expression coincides with the oscillation in the intracellular dTTP concentration. The sequence is that of Thymidine kinase, cytosolic (TK1) from Bos taurus (Bovine).